A 209-amino-acid chain; its full sequence is Thiamine-phosphate synthase (209 aa).

Residues 37–41 and Asn-69 contribute to the 4-amino-2-methyl-5-(diphosphooxymethyl)pyrimidine site; that span reads QLREK. Residues Asp-70 and Asp-89 each contribute to the Mg(2+) site. Ser-108 contributes to the 4-amino-2-methyl-5-(diphosphooxymethyl)pyrimidine binding site. Position 134-136 (134-136) interacts with 2-[(2R,5Z)-2-carboxy-4-methylthiazol-5(2H)-ylidene]ethyl phosphate; it reads TNT. Lys-137 contributes to the 4-amino-2-methyl-5-(diphosphooxymethyl)pyrimidine binding site. Residues Gly-164 and 184 to 185 contribute to the 2-[(2R,5Z)-2-carboxy-4-methylthiazol-5(2H)-ylidene]ethyl phosphate site; that span reads VS.

This sequence belongs to the thiamine-phosphate synthase family. Mg(2+) serves as cofactor.

It catalyses the reaction 2-[(2R,5Z)-2-carboxy-4-methylthiazol-5(2H)-ylidene]ethyl phosphate + 4-amino-2-methyl-5-(diphosphooxymethyl)pyrimidine + 2 H(+) = thiamine phosphate + CO2 + diphosphate. The catalysed reaction is 2-(2-carboxy-4-methylthiazol-5-yl)ethyl phosphate + 4-amino-2-methyl-5-(diphosphooxymethyl)pyrimidine + 2 H(+) = thiamine phosphate + CO2 + diphosphate. The enzyme catalyses 4-methyl-5-(2-phosphooxyethyl)-thiazole + 4-amino-2-methyl-5-(diphosphooxymethyl)pyrimidine + H(+) = thiamine phosphate + diphosphate. It participates in cofactor biosynthesis; thiamine diphosphate biosynthesis; thiamine phosphate from 4-amino-2-methyl-5-diphosphomethylpyrimidine and 4-methyl-5-(2-phosphoethyl)-thiazole: step 1/1. Condenses 4-methyl-5-(beta-hydroxyethyl)thiazole monophosphate (THZ-P) and 2-methyl-4-amino-5-hydroxymethyl pyrimidine pyrophosphate (HMP-PP) to form thiamine monophosphate (TMP). This chain is Thiamine-phosphate synthase, found in Methanobrevibacter smithii (strain ATCC 35061 / DSM 861 / OCM 144 / PS).